The following is a 37-amino-acid chain: MKVQPSVKRICDKCQVVRRKGRVLVICSNPRHKQRQG.

This sequence belongs to the bacterial ribosomal protein bL36 family.

This is Large ribosomal subunit protein bL36 from Micrococcus luteus (strain ATCC 4698 / DSM 20030 / JCM 1464 / CCM 169 / CCUG 5858 / IAM 1056 / NBRC 3333 / NCIMB 9278 / NCTC 2665 / VKM Ac-2230) (Micrococcus lysodeikticus).